The sequence spans 310 residues: GMP synthase [glutamine-hydrolyzing] subunit B (310 aa).

A GMPS ATP-PPase domain is found at 2-185 (FKTEPFIEES…LGLPDQIAHR (184 aa)). Position 29–35 (29–35 (SGGVDSA)) interacts with ATP.

Heterodimer composed of a glutamine amidotransferase subunit (A) and a GMP-binding subunit (B).

It carries out the reaction XMP + L-glutamine + ATP + H2O = GMP + L-glutamate + AMP + diphosphate + 2 H(+). It participates in purine metabolism; GMP biosynthesis; GMP from XMP (L-Gln route): step 1/1. Its function is as follows. Catalyzes the synthesis of GMP from XMP. The chain is GMP synthase [glutamine-hydrolyzing] subunit B from Methanococcus maripaludis (strain DSM 14266 / JCM 13030 / NBRC 101832 / S2 / LL).